Reading from the N-terminus, the 450-residue chain is Equilibrative nucleotide transporter 1 (450 aa).

Helical transmembrane passes span Phe-63–Ile-83, Ile-101–Tyr-121, Leu-133–Val-153, Ala-168–Ala-188, Met-196–Leu-216, Leu-234–His-254, His-300–Thr-320, Ile-334–Phe-354, Ile-361–His-381, Ile-394–Ala-414, and Thr-430–Ile-450.

The protein belongs to the SLC29A/ENT transporter (TC 2.A.57) family. In young seedlings, expressed in root elongation zone, root cortex, root-hair, at the transition to the shoot and cotyledons. Expressed in hydathodes of fully developed leaves and pollen.

Its subcellular location is the vacuole membrane. Its function is as follows. Nucleoside transporter involved in adenosine transport and required for nucleotide metabolism which influences growth and pollen germination. Has high affinity for adenosine when expressed in a heterologous system (yeast). This chain is Equilibrative nucleotide transporter 1 (ENT1), found in Arabidopsis thaliana (Mouse-ear cress).